A 278-amino-acid chain; its full sequence is Tryptophan synthase alpha chain (278 aa).

Residues Glu-50 and Asp-61 each act as proton acceptor in the active site.

The protein belongs to the TrpA family. As to quaternary structure, tetramer of two alpha and two beta chains.

It catalyses the reaction (1S,2R)-1-C-(indol-3-yl)glycerol 3-phosphate + L-serine = D-glyceraldehyde 3-phosphate + L-tryptophan + H2O. Its pathway is amino-acid biosynthesis; L-tryptophan biosynthesis; L-tryptophan from chorismate: step 5/5. The alpha subunit is responsible for the aldol cleavage of indoleglycerol phosphate to indole and glyceraldehyde 3-phosphate. This Nitrobacter hamburgensis (strain DSM 10229 / NCIMB 13809 / X14) protein is Tryptophan synthase alpha chain.